A 209-amino-acid chain; its full sequence is Eukaryotic translation initiation factor isoform 4E-2 (209 aa).

The segment at 1–29 is disordered; that stretch reads MAEVEAALPVAATETPEVAAEGDAGAAEA. Residues 9 to 29 show a composition bias toward low complexity; it reads PVAATETPEVAAEGDAGAAEA. MRNA is bound by residues 51–56, lysine 83, and 101–102; these read PGAAWG and WE. An intrachain disulfide couples cysteine 106 to cysteine 145. MRNA is bound by residues 152-157 and 197-200; these read RQRQDK and RSQK.

It belongs to the eukaryotic initiation factor 4E family. In terms of assembly, EIF4F is a multi-subunit complex, the composition of which varies with external and internal environmental conditions. It is composed of at least EIF4A, EIF4E and EIF4G. EIF4E is also known to interact with other partners. In higher plants two isoforms of EIF4F have been identified, named isoform EIF4F and isoform EIF(iso)4F. Isoform EIF4F has subunits p220 and p26, whereas isoform EIF(iso)4F has subunits p82 and p28. In terms of processing, according to the redox status, the Cys-106-Cys-145 disulfide bridge may have a role in regulating protein function by affecting its ability to bind capped mRNA.

The protein resides in the cytoplasm. It is found in the nucleus. Component of the protein complex eIF4F, which is involved in the recognition of the mRNA cap, ATP-dependent unwinding of 5'-terminal secondary structure and recruitment of mRNA to the ribosome. Recognizes and binds the 7-methylguanosine-containing mRNA cap during an early step in the initiation of protein synthesis and facilitates ribosome binding by inducing the unwinding of the mRNAs secondary structures. The chain is Eukaryotic translation initiation factor isoform 4E-2 from Triticum aestivum (Wheat).